The primary structure comprises 92 residues: Small ribosomal subunit protein uS19c (92 aa).

The protein belongs to the universal ribosomal protein uS19 family.

Its subcellular location is the plastid. It is found in the chloroplast. In terms of biological role, protein S19 forms a complex with S13 that binds strongly to the 16S ribosomal RNA. This Fagopyrum esculentum subsp. ancestrale (Wild buckwheat) protein is Small ribosomal subunit protein uS19c.